Here is a 60-residue protein sequence, read N- to C-terminus: Large ribosomal subunit protein bL32 (60 aa).

Positions 1-23 are disordered; sequence MAVPRNRHSNARKNIRRSHHAKQ.

Belongs to the bacterial ribosomal protein bL32 family.

The protein is Large ribosomal subunit protein bL32 of Chlamydia abortus (strain DSM 27085 / S26/3) (Chlamydophila abortus).